Here is a 381-residue protein sequence, read N- to C-terminus: Beta-lactamase (381 aa).

The signal sequence occupies residues 1 to 20 (MMRKSLCCALLLGISCSALA). The active-site Acyl-ester intermediate is the Ser84. The Proton acceptor role is filled by Tyr170. 335-337 (KTG) lines the substrate pocket.

It belongs to the class-C beta-lactamase family.

It is found in the periplasm. It carries out the reaction a beta-lactam + H2O = a substituted beta-amino acid. This protein is a serine beta-lactamase with a substrate specificity for cephalosporins. The polypeptide is Beta-lactamase (ampC) (Enterobacter cloacae).